Here is a 618-residue protein sequence, read N- to C-terminus: MPAYRSRTTTHGRNMAGARGLWRATGMKDSDFGKPIIAVVNSFTQFVPGHVHLKDLGQLVAREIEAAGGVAKEFNTIAVDDGIAMGHDGMLYSLPSRELIADSVEYMVNAHCADAMVCISNCDKITPGMLMAAMRLNIPAVFVSGGPMEAGKVVLKGKTHAVDLIDAMVAAADSAMSDEDVQTMERSACPTCGSCSGMFTANSMNCLTEALGLSLPGNGSVLATHSDRKRLFVEAGHTIVDLARRYYEGDDASVLPRNIANFKAFENAMTLDIAMGGSTNTVLHLLAAAREAELDFSMKDIDRLSRRVPCLSKIAPSVSDVHMEDVHRAGGIMAILGELDRAGLLDTSCTTVHSETLGAALARWDIRQSNSESVRTFFRAAPGGVPSQTAFSQDRRYDELDLDREKGVIRDAAHAFSKDGGLAVLYGNIALDGCIVKTAGVDASILTFSGPVKVFESQDDAVSAILTNKIVAGDVVVIRYEGPRGGPGMQEMLYPTSYLKSKGLGKACALITDGRFSGGTSGLSIGHVSPEAAEGGLIGLVRDGDRISIDIPNRTISLDVSEAELAKRGEEERARGEAAWTPKDRKRNVSAALQAYAMLTTSAANGAVRDVKRRFGKN.

Asp-81 contributes to the Mg(2+) binding site. Cys-122 contacts [2Fe-2S] cluster. Mg(2+) is bound by residues Asp-123 and Lys-124. Lys-124 carries the post-translational modification N6-carboxylysine. Position 195 (Cys-195) interacts with [2Fe-2S] cluster. Glu-491 contributes to the Mg(2+) binding site. Ser-517 functions as the Proton acceptor in the catalytic mechanism.

This sequence belongs to the IlvD/Edd family. As to quaternary structure, homodimer. The cofactor is [2Fe-2S] cluster. Mg(2+) is required as a cofactor.

It carries out the reaction (2R)-2,3-dihydroxy-3-methylbutanoate = 3-methyl-2-oxobutanoate + H2O. It catalyses the reaction (2R,3R)-2,3-dihydroxy-3-methylpentanoate = (S)-3-methyl-2-oxopentanoate + H2O. Its pathway is amino-acid biosynthesis; L-isoleucine biosynthesis; L-isoleucine from 2-oxobutanoate: step 3/4. The protein operates within amino-acid biosynthesis; L-valine biosynthesis; L-valine from pyruvate: step 3/4. Functions in the biosynthesis of branched-chain amino acids. Catalyzes the dehydration of (2R,3R)-2,3-dihydroxy-3-methylpentanoate (2,3-dihydroxy-3-methylvalerate) into 2-oxo-3-methylpentanoate (2-oxo-3-methylvalerate) and of (2R)-2,3-dihydroxy-3-methylbutanoate (2,3-dihydroxyisovalerate) into 2-oxo-3-methylbutanoate (2-oxoisovalerate), the penultimate precursor to L-isoleucine and L-valine, respectively. The sequence is that of Dihydroxy-acid dehydratase from Rhodopseudomonas palustris (strain TIE-1).